We begin with the raw amino-acid sequence, 660 residues long: MKTVVFAYHDMGCLGIEALLAAGYEISAIFTHTDNPGEKAFYGSVARLAAERGIPVYAPDNVNHPLWVERIAQLSPEVIFSFYYRHLICDEILQLAPAGAFNLHGSLLPKYRGRAPLNWVLVNGETETGVTLHRMVKRADAGAIVAQLRVAIAPDDIAITLHHKLCHAARQLLEQTLPAIKHGNILEIAQRENEATCFGRRTPDDSFLEWHKPASVLHNMVRAVADPWPGAFSYVGNQKFTVWSSRVHPHASKAQPGSVISVAPLLIACGDGALEIVTGQAGDGITMQGSQLAQTLGLVQGSRLNSQPACTARRRTRVLILGVNGFIGNHLTERLLREDHYEVYGLDIGSDAISRFLNHPHFHFVEGDISIHSEWIEYHVKKCDVVLPLVAIATPIEYTRNPLRVFELDFEENLRIIRYCVKYRKRIIFPSTSEVYGMCSDKYFDEDHSNLIVGPVNKPRWIYSVSKQLLDRVIWAYGEKEGLQFTLFRPFNWMGPRLDNLNAARIGSSRAITQLILNLVEGSPIKLIDGGKQKRCFTDIRDGIEALYRIIENAGNRCDGEIINIGNPENEASIEELGEMLLASFEKHPLRHHFPPFAGFRVVESSSYYGKGYQDVEHRKPSIRNAHHCLDWEPKIDMQETIDETLDFFLRTVDLTDKPS.

Positions 1 to 304 are formyltransferase ArnAFT; the sequence is MKTVVFAYHD…TLGLVQGSRL (304 aa). (6R)-10-formyltetrahydrofolate is bound at residue 86 to 88; it reads HLI. His-104 acts as the Proton donor; for formyltransferase activity in catalysis. Residues Arg-114 and 136-140 contribute to the (6R)-10-formyltetrahydrofolate site; that span reads VKRAD. The segment at 314-660 is dehydrogenase ArnADH; that stretch reads RRTRVLILGV…RTVDLTDKPS (347 aa). Residues Asp-347 and 368-369 contribute to the NAD(+) site; that span reads DI. UDP-alpha-D-glucuronate contacts are provided by residues Ala-393, Tyr-398, and 432–433; that span reads TS. Residue Glu-434 is the Proton acceptor; for decarboxylase activity of the active site. Residues Arg-460, Asn-492, 526 to 535, and Tyr-613 contribute to the UDP-alpha-D-glucuronate site; that span reads KLIDGGKQKR. Arg-619 acts as the Proton donor; for decarboxylase activity in catalysis.

This sequence in the N-terminal section; belongs to the Fmt family. UDP-L-Ara4N formyltransferase subfamily. The protein in the C-terminal section; belongs to the NAD(P)-dependent epimerase/dehydratase family. UDP-glucuronic acid decarboxylase subfamily. As to quaternary structure, homohexamer, formed by a dimer of trimers.

It carries out the reaction UDP-alpha-D-glucuronate + NAD(+) = UDP-beta-L-threo-pentopyranos-4-ulose + CO2 + NADH. The enzyme catalyses UDP-4-amino-4-deoxy-beta-L-arabinose + (6R)-10-formyltetrahydrofolate = UDP-4-deoxy-4-formamido-beta-L-arabinose + (6S)-5,6,7,8-tetrahydrofolate + H(+). The protein operates within nucleotide-sugar biosynthesis; UDP-4-deoxy-4-formamido-beta-L-arabinose biosynthesis; UDP-4-deoxy-4-formamido-beta-L-arabinose from UDP-alpha-D-glucuronate: step 1/3. It functions in the pathway nucleotide-sugar biosynthesis; UDP-4-deoxy-4-formamido-beta-L-arabinose biosynthesis; UDP-4-deoxy-4-formamido-beta-L-arabinose from UDP-alpha-D-glucuronate: step 3/3. It participates in bacterial outer membrane biogenesis; lipopolysaccharide biosynthesis. Bifunctional enzyme that catalyzes the oxidative decarboxylation of UDP-glucuronic acid (UDP-GlcUA) to UDP-4-keto-arabinose (UDP-Ara4O) and the addition of a formyl group to UDP-4-amino-4-deoxy-L-arabinose (UDP-L-Ara4N) to form UDP-L-4-formamido-arabinose (UDP-L-Ara4FN). The modified arabinose is attached to lipid A and is required for resistance to polymyxin and cationic antimicrobial peptides. This Escherichia coli O157:H7 protein is Bifunctional polymyxin resistance protein ArnA.